A 193-amino-acid polypeptide reads, in one-letter code: uncharacterized protein (193 aa).

This is an uncharacterized protein from Dictyostelium discoideum (Social amoeba).